The following is a 51-amino-acid chain: Large ribosomal subunit protein eL39 (51 aa).

Belongs to the eukaryotic ribosomal protein eL39 family. Interacts with IMPACT.

The chain is Large ribosomal subunit protein eL39 (RPL39) from Gallus gallus (Chicken).